A 148-amino-acid polypeptide reads, in one-letter code: MPEINSVIIAGNLTKDPVFRQTNSGGTPVVNFSIACNRRFRDSNHQWQEDVCYVGVVAWNKLAESCRDNLRKSSAVLVDGELQSRTWKAQDGTSRTVVEIKARRIQFLNKRKKNGEDDEEGFIEDDTHETHHLDDDGHMYEYKYLSSD.

Residues isoleucine 4 to asparagine 109 enclose the SSB domain.

In terms of assembly, homotetramer.

The chain is Single-stranded DNA-binding protein 2 (ssb2) from Chlorobaculum tepidum (strain ATCC 49652 / DSM 12025 / NBRC 103806 / TLS) (Chlorobium tepidum).